Consider the following 324-residue polypeptide: UDP-N-acetylenolpyruvoylglucosamine reductase (324 aa).

The FAD-binding PCMH-type domain maps to 36–203 (FRAGGLAELM…TSVLFEGYPE (168 aa)). Arg-183 is a catalytic residue. The active-site Proton donor is Ser-232. Residue Glu-302 is part of the active site.

The protein belongs to the MurB family. FAD is required as a cofactor.

It is found in the cytoplasm. It carries out the reaction UDP-N-acetyl-alpha-D-muramate + NADP(+) = UDP-N-acetyl-3-O-(1-carboxyvinyl)-alpha-D-glucosamine + NADPH + H(+). It participates in cell wall biogenesis; peptidoglycan biosynthesis. Cell wall formation. The sequence is that of UDP-N-acetylenolpyruvoylglucosamine reductase from Rhizobium johnstonii (strain DSM 114642 / LMG 32736 / 3841) (Rhizobium leguminosarum bv. viciae).